We begin with the raw amino-acid sequence, 228 residues long: Lipoprotein-releasing system ATP-binding protein LolD (228 aa).

The ABC transporter domain occupies 6 to 228 (IKCLNVVKGY…EAGVLNKQGQ (223 aa)). 42–49 (GASGSGKS) serves as a coordination point for ATP.

It belongs to the ABC transporter superfamily. Lipoprotein translocase (TC 3.A.1.125) family. In terms of assembly, the complex is composed of two ATP-binding proteins (LolD) and two transmembrane proteins (LolC and LolE).

Its subcellular location is the cell inner membrane. Part of the ABC transporter complex LolCDE involved in the translocation of mature outer membrane-directed lipoproteins, from the inner membrane to the periplasmic chaperone, LolA. Responsible for the formation of the LolA-lipoprotein complex in an ATP-dependent manner. This Saccharophagus degradans (strain 2-40 / ATCC 43961 / DSM 17024) protein is Lipoprotein-releasing system ATP-binding protein LolD.